A 410-amino-acid polypeptide reads, in one-letter code: Arginine deiminase (410 aa).

Cysteine 400 acts as the Amidino-cysteine intermediate in catalysis.

The protein belongs to the arginine deiminase family.

It localises to the cytoplasm. The catalysed reaction is L-arginine + H2O = L-citrulline + NH4(+). Its pathway is amino-acid degradation; L-arginine degradation via ADI pathway; carbamoyl phosphate from L-arginine: step 1/2. The chain is Arginine deiminase (arcA) from Borreliella burgdorferi (strain ATCC 35210 / DSM 4680 / CIP 102532 / B31) (Borrelia burgdorferi).